A 295-amino-acid chain; its full sequence is Pyridoxal 5'-phosphate synthase subunit PdxS (295 aa).

Asp25 is a binding site for D-ribose 5-phosphate. Lys82 serves as the catalytic Schiff-base intermediate with D-ribose 5-phosphate. Position 154 (Gly154) interacts with D-ribose 5-phosphate. Arg166 is a binding site for D-glyceraldehyde 3-phosphate. Residues Gly215 and Gly236–Ser237 contribute to the D-ribose 5-phosphate site.

The protein belongs to the PdxS/SNZ family. In terms of assembly, in the presence of PdxT, forms a dodecamer of heterodimers.

It carries out the reaction aldehydo-D-ribose 5-phosphate + D-glyceraldehyde 3-phosphate + L-glutamine = pyridoxal 5'-phosphate + L-glutamate + phosphate + 3 H2O + H(+). It functions in the pathway cofactor biosynthesis; pyridoxal 5'-phosphate biosynthesis. In terms of biological role, catalyzes the formation of pyridoxal 5'-phosphate from ribose 5-phosphate (RBP), glyceraldehyde 3-phosphate (G3P) and ammonia. The ammonia is provided by the PdxT subunit. Can also use ribulose 5-phosphate and dihydroxyacetone phosphate as substrates, resulting from enzyme-catalyzed isomerization of RBP and G3P, respectively. The protein is Pyridoxal 5'-phosphate synthase subunit PdxS of Actinobacillus pleuropneumoniae serotype 5b (strain L20).